The primary structure comprises 370 residues: DNA primase large subunit PriL (370 aa).

C268, C341, C350, and C354 together coordinate [4Fe-4S] cluster.

Belongs to the eukaryotic-type primase large subunit family. Heterodimer of a small subunit (PriS) and a large subunit (PriL). Requires [4Fe-4S] cluster as cofactor.

In terms of biological role, regulatory subunit of DNA primase, an RNA polymerase that catalyzes the synthesis of short RNA molecules used as primers for DNA polymerase during DNA replication. Stabilizes and modulates the activity of the small subunit, increasing the rate of DNA synthesis, and conferring RNA synthesis capability. The DNA polymerase activity may enable DNA primase to also catalyze primer extension after primer synthesis. May also play a role in DNA repair. This Archaeoglobus fulgidus (strain ATCC 49558 / DSM 4304 / JCM 9628 / NBRC 100126 / VC-16) protein is DNA primase large subunit PriL.